Here is a 365-residue protein sequence, read N- to C-terminus: 3-dehydroquinate synthase (365 aa).

Residues 69–74 (DGEAHK), 103–107 (GVIGD), 127–128 (TT), Lys140, and Lys149 contribute to the NAD(+) site. 3 residues coordinate Zn(2+): Glu182, His245, and His262.

The protein belongs to the sugar phosphate cyclases superfamily. Dehydroquinate synthase family. Co(2+) is required as a cofactor. Requires Zn(2+) as cofactor. It depends on NAD(+) as a cofactor.

It localises to the cytoplasm. The enzyme catalyses 7-phospho-2-dehydro-3-deoxy-D-arabino-heptonate = 3-dehydroquinate + phosphate. Its pathway is metabolic intermediate biosynthesis; chorismate biosynthesis; chorismate from D-erythrose 4-phosphate and phosphoenolpyruvate: step 2/7. Functionally, catalyzes the conversion of 3-deoxy-D-arabino-heptulosonate 7-phosphate (DAHP) to dehydroquinate (DHQ). The sequence is that of 3-dehydroquinate synthase from Pseudomonas putida (strain ATCC 700007 / DSM 6899 / JCM 31910 / BCRC 17059 / LMG 24140 / F1).